A 1477-amino-acid chain; its full sequence is Neurexin-1 (1477 aa).

The N-terminal stretch at methionine 1–glycine 30 is a signal peptide. Residues leucine 31–cysteine 217 form the Laminin G-like 1 domain. The Extracellular portion of the chain corresponds to leucine 31–threonine 1401. Residues asparagine 125 and asparagine 190 are each glycosylated (N-linked (GlcNAc...) asparagine). The tract at residues aspartate 198 to glutamate 221 is disordered. An EGF-like 1 domain is found at glycine 213–serine 256. 2 cysteine pairs are disulfide-bonded: cysteine 228-cysteine 243 and cysteine 245-cysteine 255. Laminin G-like domains follow at residues isoleucine 283–cysteine 473 and aspartate 480–cysteine 672. Residues aspartate 329, leucine 346, and methionine 407 each contribute to the Ca(2+) site. Intrachain disulfides connect cysteine 437–cysteine 473, cysteine 643–cysteine 672, cysteine 680–cysteine 691, cysteine 685–cysteine 700, and cysteine 702–cysteine 712. Positions threonine 676–glutamate 713 constitute an EGF-like 2 domain. 2 consecutive Laminin G-like domains span residues valine 718–cysteine 891 and aspartate 905–cysteine 1080. Residues aspartate 765 and leucine 782 each contribute to the Ca(2+) site. Asparagine 790 carries N-linked (GlcNAc...) asparagine glycosylation. Arginine 841 provides a ligand contact to Ca(2+). Cystine bridges form between cysteine 883–cysteine 891, cysteine 1052–cysteine 1080, cysteine 1087–cysteine 1098, cysteine 1092–cysteine 1107, and cysteine 1109–cysteine 1119. Residues proline 1083–asparagine 1120 form the EGF-like 3 domain. The Laminin G-like 6 domain maps to tyrosine 1126–valine 1294. 2 residues coordinate Ca(2+): aspartate 1176 and valine 1193. Residue asparagine 1223 is glycosylated (N-linked (GlcNAc...) asparagine). Ca(2+) contacts are provided by isoleucine 1245 and asparagine 1247. Residues threonine 1325 to serine 1390 are disordered. Serine 1355 carries an O-linked (Xyl...) (heparan sulfate) serine glycan. The helical transmembrane segment at glycine 1402–methionine 1422 threads the bilayer. The Cytoplasmic portion of the chain corresponds to tyrosine 1423 to valine 1477. Positions asparagine 1444 to asparagine 1470 are interaction with CASK. The segment at asparagine 1444 to valine 1477 is disordered.

The protein belongs to the neurexin family. In terms of assembly, interacts (via laminin G-like domain 2 and/or laminin G-like domain 6) with NLGN1 forming a heterotetramer, where one NLGN1 dimer interacts with one NRXN1 dimer. Also interacts (via laminin G-like domain 2 and/or laminin G-like domain 6) with NLGN2, NLGN3 and NLGN4L; interactions with NLGN1, NLGN2, NLGN3 and NLGN4L are calcium-dependent. Interacts (via cytoplasmic C-terminal region) with CASK (via the PDZ, SH3 and guanylate kinase-like domains). Interacts (via cytoplasmic C-terminus) with CASKIN1 and APBA1. Interacts (via laminin G-like domain 2) with NXPH1 and NXPH3. Alpha-type isoforms (neurexin-1-alpha) interact (via laminin G-like domain 2 and/or laminin G-like domain 6) with DAG1 (via alpha-dystroglycan chain). Interacts with LRRTM1, LRRTM2, LRRTM3 and LRRTM4. Interacts with SYT13 and SYTL1. Interacts with CBLN1, CBLN2 and, less avidly, with CBLN4. Interacts with CLSTN3. O-glycosylated; contains heparan sulfate. Heparan sulfate attachment is required for synapse development by mediating interactions with neuroligins and LRRTM2. Brain.

The protein localises to the presynaptic cell membrane. Functionally, cell surface protein involved in cell-cell-interactions, exocytosis of secretory granules and regulation of signal transmission. Function is isoform-specific. Alpha-type isoforms have a long N-terminus with six laminin G-like domains and play an important role in synaptic signal transmission. Alpha-type isoforms play a role in the regulation of calcium channel activity and Ca(2+)-triggered neurotransmitter release at synapses and at neuromuscular junctions. They play an important role in Ca(2+)-triggered exocytosis of secretory granules in pituitary gland. They may affect their functions at synapses and in endocrine cells via their interactions with proteins from the exocytotic machinery. Likewise, alpha-type isoforms play a role in regulating the activity of postsynaptic NMDA receptors, a subtype of glutamate-gated ion channels. Both alpha-type and beta-type isoforms may play a role in the formation or maintenance of synaptic junctions via their interactions (via the extracellular domains) with neuroligin family members, CBLN1 or CBLN2. In vitro, triggers the de novo formation of presynaptic structures. May be involved in specification of excitatory synapses. Alpha-type isoforms were first identified as receptors for alpha-latrotoxin from spider venom. The polypeptide is Neurexin-1 (NRXN1) (Homo sapiens (Human)).